A 455-amino-acid chain; its full sequence is Bifunctional protein GlmU (455 aa).

Residues 1–227 form a pyrophosphorylase region; that stretch reads MGLSVIILAA…CEEVQGVNDR (227 aa). Residues 8–11, Lys-22, Gln-73, 78–79, 100–102, Gly-137, Glu-152, Asn-167, and Asn-225 contribute to the UDP-N-acetyl-alpha-D-glucosamine site; these read LAAG, GT, and YGD. Asp-102 serves as a coordination point for Mg(2+). Asn-225 provides a ligand contact to Mg(2+). Residues 228 to 248 form a linker region; it reads WELTKLERYYQRLMAKKLSLA. An N-acetyltransferase region spans residues 249-455; that stretch reads GVTIIDPERF…KGWHRPTKKE (207 aa). UDP-N-acetyl-alpha-D-glucosamine-binding residues include Arg-332 and Lys-350. His-362 functions as the Proton acceptor in the catalytic mechanism. The UDP-N-acetyl-alpha-D-glucosamine site is built by Tyr-365 and Asn-376. Acetyl-CoA-binding positions include Ala-379, 385–386, Ser-404, Ala-422, and Arg-439; that span reads NY.

It in the N-terminal section; belongs to the N-acetylglucosamine-1-phosphate uridyltransferase family. The protein in the C-terminal section; belongs to the transferase hexapeptide repeat family. As to quaternary structure, homotrimer. Mg(2+) serves as cofactor.

The protein localises to the cytoplasm. The enzyme catalyses alpha-D-glucosamine 1-phosphate + acetyl-CoA = N-acetyl-alpha-D-glucosamine 1-phosphate + CoA + H(+). It carries out the reaction N-acetyl-alpha-D-glucosamine 1-phosphate + UTP + H(+) = UDP-N-acetyl-alpha-D-glucosamine + diphosphate. It functions in the pathway nucleotide-sugar biosynthesis; UDP-N-acetyl-alpha-D-glucosamine biosynthesis; N-acetyl-alpha-D-glucosamine 1-phosphate from alpha-D-glucosamine 6-phosphate (route II): step 2/2. The protein operates within nucleotide-sugar biosynthesis; UDP-N-acetyl-alpha-D-glucosamine biosynthesis; UDP-N-acetyl-alpha-D-glucosamine from N-acetyl-alpha-D-glucosamine 1-phosphate: step 1/1. Its pathway is bacterial outer membrane biogenesis; LPS lipid A biosynthesis. Its function is as follows. Catalyzes the last two sequential reactions in the de novo biosynthetic pathway for UDP-N-acetylglucosamine (UDP-GlcNAc). The C-terminal domain catalyzes the transfer of acetyl group from acetyl coenzyme A to glucosamine-1-phosphate (GlcN-1-P) to produce N-acetylglucosamine-1-phosphate (GlcNAc-1-P), which is converted into UDP-GlcNAc by the transfer of uridine 5-monophosphate (from uridine 5-triphosphate), a reaction catalyzed by the N-terminal domain. The sequence is that of Bifunctional protein GlmU from Coxiella burnetii (strain RSA 493 / Nine Mile phase I).